A 94-amino-acid polypeptide reads, in one-letter code: Co-chaperonin GroES (94 aa).

The protein belongs to the GroES chaperonin family. In terms of assembly, heptamer of 7 subunits arranged in a ring. Interacts with the chaperonin GroEL.

It is found in the cytoplasm. Its function is as follows. Together with the chaperonin GroEL, plays an essential role in assisting protein folding. The GroEL-GroES system forms a nano-cage that allows encapsulation of the non-native substrate proteins and provides a physical environment optimized to promote and accelerate protein folding. GroES binds to the apical surface of the GroEL ring, thereby capping the opening of the GroEL channel. The polypeptide is Co-chaperonin GroES (Lactiplantibacillus plantarum (strain ATCC BAA-793 / NCIMB 8826 / WCFS1) (Lactobacillus plantarum)).